A 79-amino-acid polypeptide reads, in one-letter code: RNA-binding protein KhpA (79 aa).

In terms of domain architecture, KH spans 32-79; the sequence is TVVIELRVDPAELGKVIGKQGRIARALRTILTAIGRKIGKRVVLEILE.

Belongs to the KhpA RNA-binding protein family.

It localises to the cytoplasm. A probable RNA-binding protein. The polypeptide is RNA-binding protein KhpA (Aquifex aeolicus (strain VF5)).